Consider the following 147-residue polypeptide: Hemoglobin subunit beta-1 (147 aa).

Residues 3–147 (EWTDKERSII…VVSALGKQYH (145 aa)) form the Globin domain. 2 residues coordinate heme b: His-64 and His-93.

This sequence belongs to the globin family. In terms of assembly, heterotetramer of two alpha chains and two beta chains. Red blood cells.

Its function is as follows. Involved in oxygen transport from gills to the various peripheral tissues. This is Hemoglobin subunit beta-1 (hbb1) from Pagothenia borchgrevinki (Bald rockcod).